A 352-amino-acid polypeptide reads, in one-letter code: tRNA pseudouridine synthase D (352 aa).

The active-site Nucleophile is the Asp78. The 147-residue stretch at 153–299 (GVPNYYGEQR…LDQDRRPLLL (147 aa)) folds into the TRUD domain.

This sequence belongs to the pseudouridine synthase TruD family.

It catalyses the reaction uridine(13) in tRNA = pseudouridine(13) in tRNA. In terms of biological role, responsible for synthesis of pseudouridine from uracil-13 in transfer RNAs. The sequence is that of tRNA pseudouridine synthase D from Aeromonas salmonicida (strain A449).